The primary structure comprises 87 residues: MRLTALVSGHVQGVGYRLFVQRYARDLGLHGYAENLSDGKVEVIAEGDEDALNRLLHWLRRGPPHARVQAVDTQYSEETGLREFHIY.

In terms of domain architecture, Acylphosphatase-like spans 2 to 87; sequence RLTALVSGHV…ETGLREFHIY (86 aa). Residues arginine 17 and asparagine 35 contribute to the active site.

Belongs to the acylphosphatase family.

The catalysed reaction is an acyl phosphate + H2O = a carboxylate + phosphate + H(+). The polypeptide is Acylphosphatase (acyP) (Deinococcus radiodurans (strain ATCC 13939 / DSM 20539 / JCM 16871 / CCUG 27074 / LMG 4051 / NBRC 15346 / NCIMB 9279 / VKM B-1422 / R1)).